The primary structure comprises 332 residues: Transaldolase (332 aa).

Lys136 functions as the Schiff-base intermediate with substrate in the catalytic mechanism.

The protein belongs to the transaldolase family. Type 1 subfamily.

The protein resides in the cytoplasm. The enzyme catalyses D-sedoheptulose 7-phosphate + D-glyceraldehyde 3-phosphate = D-erythrose 4-phosphate + beta-D-fructose 6-phosphate. It functions in the pathway carbohydrate degradation; pentose phosphate pathway; D-glyceraldehyde 3-phosphate and beta-D-fructose 6-phosphate from D-ribose 5-phosphate and D-xylulose 5-phosphate (non-oxidative stage): step 2/3. Functionally, transaldolase is important for the balance of metabolites in the pentose-phosphate pathway. In Nostoc sp. (strain PCC 7120 / SAG 25.82 / UTEX 2576), this protein is Transaldolase.